The chain runs to 975 residues: Nesprin-3 (975 aa).

Over 1-925 the chain is Cytoplasmic; sequence MTQQPQEDFE…PCSLLQKACR (925 aa). Spectrin repeat units follow at residues 220 to 325 and 647 to 740; these read QDHE…RLRG and REHC…QALR. The tract at residues 778-798 is disordered; the sequence is LINPQDPIPRRQHGANPLEGH. In terms of domain architecture, KASH spans 917-975; the sequence is CSLLQKACRVALPLQLLLLLFLLLLFLLPAGEEERSCALANNFARSFALMLRYNGPPPT. The helical; Anchor for type IV membrane protein transmembrane segment at 926–946 threads the bilayer; that stretch reads VALPLQLLLLLFLLLLFLLPA. Residues 947–975 are Perinuclear space-facing; that stretch reads GEEERSCALANNFARSFALMLRYNGPPPT.

The protein belongs to the nesprin family. As to quaternary structure, core component of LINC complexes which are composed of inner nuclear membrane SUN domain-containing proteins coupled to outer nuclear membrane KASH domain-containing nesprins. SUN and KASH domain-containing proteins seem to bind each other promiscuously; however, differentially expression of LINC complex constituents can give rise to specific assemblies. Interacts with SUN1 and SUN2; probably forming respective LINC complexes. Interacts with PLEC (via actin-binding domain). Interacts with DST. Interacts with SYNE1. Interacts (via KASH domain) with TOR1A (ATP-bound); the interaction is required for SYNE3 nuclear envelope localization. In terms of processing, the disulfid bond with SUN1 or SUN2 is required for stability of the respective LINC complex under tensile forces. In terms of tissue distribution, ubiquitous.

The protein resides in the nucleus outer membrane. It localises to the nucleus envelope. The protein localises to the rough endoplasmic reticulum. As a component of the LINC (LInker of Nucleoskeleton and Cytoskeleton) complex involved in the connection between the nuclear lamina and the cytoskeleton. The nucleocytoplasmic interactions established by the LINC complex play an important role in the transmission of mechanical forces across the nuclear envelope and in nuclear movement and positioning. Probable anchoring protein which tethers the nucleus to the cytoskeleton by binding PLEC which can associate with the intermediate filament system. Plays a role in the regulation of aortic epithelial cell morphology, and is required for flow-induced centrosome polarization and directional migration in aortic endothelial cells. The polypeptide is Nesprin-3 (Syne3) (Mus musculus (Mouse)).